We begin with the raw amino-acid sequence, 297 residues long: Protein muscleblind (297 aa).

C3H1-type zinc fingers lie at residues 18-46 (WLQL…HPPA) and 52-80 (NGKV…HPPQ).

It belongs to the muscleblind family. In terms of tissue distribution, expressed in embryonic muscle cells.

The protein resides in the nucleus. In terms of biological role, required for terminal differentiation of photoreceptor cells. Vital for embryonic development. This is Protein muscleblind (mbl) from Drosophila melanogaster (Fruit fly).